A 1116-amino-acid polypeptide reads, in one-letter code: MQDSGFKKKDRSTNIPQEQFVYTRGGEHKVMKKVVNSVLASALAITVAPMAFAAEDTTTAPKMDAAMEKTVKRLEALGLVAGYGNGDFGADKTITRAEFATLIVRARGLEQGAKLAQFNTTYTDVRSTDWFAGFVNVASGEEIVKGFPDKSFKPQNQVTYAEAVTMIVRALGYEPSVRGVWPNSMISKGSELNIAKGINNPNMQQFAATIFKMLDNALRVKLMEQIEYGTDIRLNVTDETLLTKYLKVTVRDMDWAHEKGNNSDELPLVTNVPAIGLGSLKANEVTLNGKDADLGSNTTYKVAEGINPNAFDGQKVQVWIKDDRENVIVWMEGSEDEDVVMDRVSALYLKGKAFTDDIVKDLSKSDLDDVKIEMDGSEKSYRLTEDTKITYNFTRFNDPVDALSKIYKDNDTFGVKVVLNDNNEVAYLHIIDDQTIDKSVKGVKYGSKVISKIDADKKKITNLDNSKFSDLEDQDEGKDFLVFLDGQPAKLGDLKESDVYSVYYADGDKDKYLVFANRNVAEGKVEKVVSRNKTDIRLTVGGKTYKVYPDASYSENANKDVKKVNSDLDLISNLDGEEVKLLLDPSGRVRHIETKDAIDDRKPLAIITKGATYNSSKDTYDFTVMTQKGKTQIVSLDQKDIYDRYGVNYDKSNDKRQAFEKDLVELLQPKVVKEDSATDANQTVLLEVNFDSKGEVDKVKVLDSKLKYSEKSTWDKLADEDDDVVGDYEVTDKTAVFKMTGDLTPATGTKRGELKNAGTAKFKDVAKKSDLKVWYSVDEDKGEVQAIFVVDGSGLGGDHQFGMVKQYGTASKQDTITIVTKDGDSVTEKEYKLDGDADDLKVDQDIRRGDVISFTLNSDGEVIVDDVVEVVNNNHIDNTASKSATLMPEDERQKAGIDKLVVARVDEVDGNTISLNYADGKTQKYYTKASTAFIDVYDGLEGIDGVDEGDYIVMIDSADIDGTRFDYVLVVSSDDEIRTQHISTKAVTDFLNKPTRLCTKSWRWGRSSHGTKVNTVNDEAVVDGIVTLPADASVRNFNIAFDQEINSKDATVTVTNEDTLGNVTVSEVATDAKVLSFKTAKLDTTKTYIITVKGLKDKNGKAVKDVTLYVEFVAGV.

The N-terminal stretch at 1–53 (MQDSGFKKKDRSTNIPQEQFVYTRGGEHKVMKKVVNSVLASALAITVAPMAFA) is a signal peptide. 3 consecutive SLH domains span residues 54-117 (AEDT…KLAQ), 118-181 (FNTT…RGVW), and 182-231 (PNSM…YGTD).

It localises to the secreted. The protein resides in the cell wall. Its subcellular location is the S-layer. This chain is Surface layer protein, found in Brevibacillus choshinensis.